A 512-amino-acid polypeptide reads, in one-letter code: Methionine--tRNA ligase (512 aa).

A 'HIGH' region motif is present at residues 11–21; it reads YYASGKPHIGH. Zn(2+)-binding residues include Cys-126, Cys-129, Cys-143, and His-147. Positions 301–305 match the 'KMSKS' region motif; that stretch reads KMSKS. Residue Lys-304 participates in ATP binding.

The protein belongs to the class-I aminoacyl-tRNA synthetase family. MetG type 2A subfamily. As to quaternary structure, monomer. The cofactor is Zn(2+).

Its subcellular location is the cytoplasm. It carries out the reaction tRNA(Met) + L-methionine + ATP = L-methionyl-tRNA(Met) + AMP + diphosphate. In terms of biological role, is required not only for elongation of protein synthesis but also for the initiation of all mRNA translation through initiator tRNA(fMet) aminoacylation. This chain is Methionine--tRNA ligase (metG), found in Mycoplasma pneumoniae (strain ATCC 29342 / M129 / Subtype 1) (Mycoplasmoides pneumoniae).